Here is a 204-residue protein sequence, read N- to C-terminus: Ribosomal RNA small subunit methyltransferase G (204 aa).

S-adenosyl-L-methionine-binding residues include G73, F78, and R139.

This sequence belongs to the methyltransferase superfamily. RNA methyltransferase RsmG family.

It localises to the cytoplasm. The catalysed reaction is guanosine(527) in 16S rRNA + S-adenosyl-L-methionine = N(7)-methylguanosine(527) in 16S rRNA + S-adenosyl-L-homocysteine. In terms of biological role, specifically methylates the N7 position of guanine in position 527 of 16S rRNA. The sequence is that of Ribosomal RNA small subunit methyltransferase G from Coxiella burnetii (strain Dugway 5J108-111).